The primary structure comprises 237 residues: MEKREELYRGKAKSVYKTDDANRLILLFRNDTSAFDGKRIEQLDRKGMVNNKFNAFIMQKLEAAGIPTQFDKLLGDNECLVKKLDMIPVECVVRNYAAGSLVKRLGVEEGLKLNPYTFELFLKDDAKGDPFINESHVVAFGWGTAEQLARMKELSLKVNDVLSKLFDDAGLLLVDFKLEFGVFHDGSIVLGDEFSPDGCRLWDKDTKKKMDKDRFRQGLGDVIEAYEEVANRLGVPL.

This sequence belongs to the SAICAR synthetase family.

It catalyses the reaction 5-amino-1-(5-phospho-D-ribosyl)imidazole-4-carboxylate + L-aspartate + ATP = (2S)-2-[5-amino-1-(5-phospho-beta-D-ribosyl)imidazole-4-carboxamido]succinate + ADP + phosphate + 2 H(+). It participates in purine metabolism; IMP biosynthesis via de novo pathway; 5-amino-1-(5-phospho-D-ribosyl)imidazole-4-carboxamide from 5-amino-1-(5-phospho-D-ribosyl)imidazole-4-carboxylate: step 1/2. This Pseudomonas fluorescens (strain SBW25) protein is Phosphoribosylaminoimidazole-succinocarboxamide synthase.